We begin with the raw amino-acid sequence, 74 residues long: Serine protease inhibitor Kazal-type 7 (74 aa).

A signal peptide spans 1-17; that stretch reads MKLLGGLLLLFTATCLC. In terms of domain architecture, Kazal-like spans 18 to 74; the sequence is NVDCDIYKKYPVVAIPCPIENIPVCGSDYITYGNKCKLCTEILRSNGKIQFLHEGHC. Disulfide bonds link C21–C56, C34–C53, and C42–C74.

Its subcellular location is the secreted. Its function is as follows. Probable serine protease inhibitor. The protein is Serine protease inhibitor Kazal-type 7 (Spink7) of Rattus norvegicus (Rat).